The chain runs to 268 residues: Movement and silencing protein TGBp1 (268 aa).

The region spanning M1–Q138 is the (+)RNA virus helicase ATP-binding domain. Residues Y139–N268 form the (+)RNA virus helicase C-terminal domain.

It belongs to the Tymovirales TGBp1 protein family. In terms of assembly, homodimer and homooligomer. Interacts with capsid protein. Interacts with host AGO1; this interaction targets the host protein for degradation, thereby suppressing the antiviral RNA silencing.

The protein localises to the host cytoplasm. Functionally, transports viral genome to neighboring plant cells directly through plasmosdesmata, without any budding. The movement protein allows efficient cell to cell propagation, by bypassing the host cell wall barrier. Increases plasmodesma size exclusion limit. Acts as a suppressor of RNA-mediated gene silencing, also known as post-transcriptional gene silencing (PTGS), a mechanism of plant viral defense that limits the accumulation of viral RNAs. The chain is Movement and silencing protein TGBp1 (ORF2) from Lolium latent virus (isolate Lolium/USA/US1/-) (LoLV).